Consider the following 273-residue polypeptide: MTKDIMDAVFIKEMAKTTSNLYRLGWDERNGGNITYLLDEKEVVEYLDVKQIIRTIPMDFDGKKLAGKYFLVTGSGKYFKNVEEAPAVNLGVIQVSEDGKAVHLLWGYTDSGLPTSELPAHFMSHIARLSVDPENRVVMHCHATHLLAMTFTHELTEREFTRTLWQMCTECLVVFPEGVGIIPWLVPGTNEIGEATSEKMKENRLIVWPHHGIYGAGKSMDETFGLIETAEKAAEVYTIVMSQGGIKQAITDEQLKALGERFGVEAKAGYLIN.

Glu117 is a catalytic residue. Zn(2+) is bound by residues His140, His142, and His211.

This sequence belongs to the aldolase class II family. RhaD subfamily. Zn(2+) is required as a cofactor.

Its subcellular location is the cytoplasm. The catalysed reaction is L-rhamnulose 1-phosphate = (S)-lactaldehyde + dihydroxyacetone phosphate. It functions in the pathway carbohydrate degradation; L-rhamnose degradation; glycerone phosphate from L-rhamnose: step 3/3. Catalyzes the reversible cleavage of L-rhamnulose-1-phosphate to dihydroxyacetone phosphate (DHAP) and L-lactaldehyde. This is Rhamnulose-1-phosphate aldolase from Listeria monocytogenes serotype 4b (strain F2365).